Here is a 340-residue protein sequence, read N- to C-terminus: Serpentine receptor class alpha-23 (340 aa).

Helical transmembrane passes span 34 to 54 (FIST…QALW), 114 to 136 (YFYY…DRLI), 150 to 170 (FIAI…FYIA), 199 to 219 (VRTV…YLSV), 250 to 270 (ILIV…NLLL), and 284 to 304 (VGAF…AIYF).

The protein belongs to the nematode receptor-like protein sra family.

It is found in the membrane. This Caenorhabditis elegans protein is Serpentine receptor class alpha-23 (sra-23).